A 539-amino-acid chain; its full sequence is Tetracenomycin B2 monooxygenase-dioxygenase (539 aa).

FAD is bound by residues L15, E35, Q128, and L152. Residue Y231 is the Proton acceptor of the active site. D313 is a binding site for FAD.

The protein belongs to the PheA/TfdB FAD monooxygenase family. FAD is required as a cofactor.

The enzyme catalyses tetracenomycin B2 + 2 NADPH + 2 O2 + 2 H(+) = 8-demethyltetracenomycin C + 2 NADP(+) + H2O. The catalysed reaction is tetracenomycin A2 + 2 NADPH + 2 O2 + 2 H(+) = tetracenomycin C + 2 NADP(+) + H2O. The protein operates within antibiotic biosynthesis. Functionally, involved in the biosynthesis of elloramycin, an antitumor polyketide. In vivo, probably catalyzes the triple hydroxylation of 8-demethyltetracenomycin A2 (tetracenomycin B2) at positions C-4, C-4a and C-12a to give 8-demethyltetracenomycin C (8-DMTC). In vitro, catalyzes the triple hydroxylation of tetracenomycin A2 (TCM A2) to give tetracenomycin C (TCM C). Uses NADPH as an electron donor and requires molecular O(2). The sequence is that of Tetracenomycin B2 monooxygenase-dioxygenase from Streptomyces olivaceus.